We begin with the raw amino-acid sequence, 419 residues long: UDP-N-acetylglucosamine 1-carboxyvinyltransferase (419 aa).

22–23 serves as a coordination point for phosphoenolpyruvate; that stretch reads KN. A UDP-N-acetyl-alpha-D-glucosamine-binding site is contributed by Arg-93. The Proton donor role is filled by Cys-117. Cys-117 carries the 2-(S-cysteinyl)pyruvic acid O-phosphothioketal modification. Residues Asp-306 and Ile-328 each contribute to the UDP-N-acetyl-alpha-D-glucosamine site.

Belongs to the EPSP synthase family. MurA subfamily.

It is found in the cytoplasm. The enzyme catalyses phosphoenolpyruvate + UDP-N-acetyl-alpha-D-glucosamine = UDP-N-acetyl-3-O-(1-carboxyvinyl)-alpha-D-glucosamine + phosphate. It functions in the pathway cell wall biogenesis; peptidoglycan biosynthesis. Cell wall formation. Adds enolpyruvyl to UDP-N-acetylglucosamine. This is UDP-N-acetylglucosamine 1-carboxyvinyltransferase from Vesicomyosocius okutanii subsp. Calyptogena okutanii (strain HA).